Consider the following 314-residue polypeptide: Methionyl-tRNA formyltransferase (314 aa).

Position 113–116 (113–116 (SLLP)) interacts with (6S)-5,6,7,8-tetrahydrofolate.

This sequence belongs to the Fmt family.

It carries out the reaction L-methionyl-tRNA(fMet) + (6R)-10-formyltetrahydrofolate = N-formyl-L-methionyl-tRNA(fMet) + (6S)-5,6,7,8-tetrahydrofolate + H(+). Its function is as follows. Attaches a formyl group to the free amino group of methionyl-tRNA(fMet). The formyl group appears to play a dual role in the initiator identity of N-formylmethionyl-tRNA by promoting its recognition by IF2 and preventing the misappropriation of this tRNA by the elongation apparatus. The protein is Methionyl-tRNA formyltransferase of Ectopseudomonas mendocina (strain ymp) (Pseudomonas mendocina).